The following is a 120-amino-acid chain: MTRSFSPVVSLFLLLLQTICSATVENAADCAAVGTLISSCTEFVNYGYPDPIPGSSCCDAMTVIGTYSDSSEKRKWLCNCFMDLINVYNSNATAISTLSGFCGVVLGFTIDPNTDCNFIQ.

An N-terminal signal peptide occupies residues Met-1–Ala-22. 4 disulfide bridges follow: Cys-30–Cys-80, Cys-40–Cys-57, Cys-58–Cys-102, and Cys-78–Cys-116.

Belongs to the plant LTP family.

Its function is as follows. Plant non-specific lipid-transfer proteins transfer phospholipids as well as galactolipids across membranes. May play a role in wax or cutin deposition in the cell walls of expanding epidermal cells and certain secretory tissues. This chain is Putative non-specific lipid-transfer protein 14 (LTP14), found in Arabidopsis thaliana (Mouse-ear cress).